A 380-amino-acid chain; its full sequence is MKKPIGILSPGVALGTAGGAMSSKFFLMALATFFSFAQVVIEANSWWSLGMNNPVQMSEVYIIGAQPLCSQLAGLSQGQKKLCHLYQDHMQYIGEGAKTGIKECQYQFRHRRWNCSTVDNTSVFGRVMQIGSRETAFTYAVSAAGVVNAMSRACREGELSTCGCSRAARPKDLPRDWLWGGCGDNIDYGYRFAKEFVDARERERIHAKGSYESARILMNLHNNEAGRRTVYNLADVACKCHGVSGSCSLKTCWLQLADFRKVGDALKEKYDSAAAMRLNSRGKLVQVNSRFNSPTTQDLVYIDPSPDYCVRNESTGSLGTQGRLCNKTSEGMDGCELMCCGRGYDQFKTVQTERCHCKFHWCCYVKCKKCTEIVDQFVCK.

Residues 1–37 form the signal peptide; sequence MKKPIGILSPGVALGTAGGAMSSKFFLMALATFFSFA. A propeptide spanning residues 38–61 is cleaved from the precursor; it reads QVVIEANSWWSLGMNNPVQMSEVY. A disulfide bond links Cys-104 and Cys-115. Asn-114 and Asn-120 each carry an N-linked (GlcNAc...) asparagine glycan. 10 disulfides stabilise this stretch: Cys-154-Cys-162, Cys-164-Cys-182, Cys-238-Cys-252, Cys-240-Cys-247, Cys-309-Cys-340, Cys-325-Cys-335, Cys-339-Cys-379, Cys-355-Cys-370, Cys-357-Cys-367, and Cys-362-Cys-363. Residue Ser-244 is the site of O-palmitoleoyl serine; by PORCN attachment. N-linked (GlcNAc...) asparagine glycans are attached at residues Asn-312 and Asn-326.

It belongs to the Wnt family. As to quaternary structure, forms a soluble 1:1 complex with AFM; this prevents oligomerization and is required for prolonged biological activity. The complex with AFM may represent the physiological form in body fluids. Homooligomer; disulfide-linked, leading to inactivation. Interacts with PORCN. Interacts with WLS. Interacts with glypican GCP3. Interacts with PKD1 (via extracellular domain). Interacts with TMEM67. Glycosylation is necessary for secretion but not for activity. Post-translationally, palmitoleoylation is required for efficient binding to frizzled receptors. Depalmitoleoylation leads to Wnt signaling pathway inhibition. In terms of processing, proteolytic processing by TIKI1 and TIKI2 promotes oxidation and formation of large disulfide-bond oligomers, leading to inactivation of WNT5A. In terms of tissue distribution, expressed in a gradient at the caudal end of the embryo during gastrulation and later in the distal-most aspect of several structures that extend from the body such as the limbs and genital tubercle.

The protein resides in the secreted. Its subcellular location is the extracellular space. It is found in the extracellular matrix. In terms of biological role, ligand for members of the frizzled family of seven transmembrane receptors. Can activate or inhibit canonical Wnt signaling, depending on receptor context. In the presence of FZD4, activates beta-catenin signaling. In the presence of ROR2, inhibits the canonical Wnt pathway by promoting beta-catenin degradation through a GSK3-independent pathway which involves down-regulation of beta-catenin-induced reporter gene expression. Suppression of the canonical pathway allows chondrogenesis to occur and inhibits tumor formation. Stimulates cell migration. Decreases proliferation, migration, invasiveness and clonogenicity of carcinoma cells and may act as a tumor suppressor. Mediates motility of melanoma cells. Required during embryogenesis for extension of the primary anterior-posterior axis and for outgrowth of limbs and the genital tubercle. Inhibits type II collagen expression in chondrocytes. The polypeptide is Protein Wnt-5a (Wnt5a) (Mus musculus (Mouse)).